Reading from the N-terminus, the 444-residue chain is MKQYKLVNTTQKEKTLCLEIAIDTKLWKETQQKQTQDLTKNMKIKGFRKGKVPPTLAKDYLDRAELLQRSAQAVIDAIFQPLQQEAVIADNENVIEDFPTIDFKTINENDCVILFDFDLVPQFEPPDYKHIKDLSPIVPLKDEEFNKELHNIEKNKGKLVDVSDKALANNDIAVIDFVGKVDGKVLESATAKQYELTIGSNSFIDGFESGLIGMKVGDKRQLKLKFPKDYHAEELKGKPVEFDIELKAIKQLEITPMDETNFKEYLPAQYQGFNSLKEFKTYFHKLVSAKKLEITLQENSVKIRQFFLANTTLPYIPDSLIKLESDRLLRAQKDQAEQYKIPFERLLAASKLSLEQLQQRNIKEARDNVTFALVMKRIADVEKIKVDNKKIHSEIESIIDVEYPFVNAELKKQMFHNMEQQKDFVESIILNRLTTTKIIEYSTH.

In terms of domain architecture, PPIase FKBP-type spans 170–255 (NDIAVIDFVG…LKAIKQLEIT (86 aa)).

It belongs to the FKBP-type PPIase family. Tig subfamily.

The protein localises to the cytoplasm. It carries out the reaction [protein]-peptidylproline (omega=180) = [protein]-peptidylproline (omega=0). Its function is as follows. Involved in protein export. Acts as a chaperone by maintaining the newly synthesized protein in an open conformation. Functions as a peptidyl-prolyl cis-trans isomerase. The sequence is that of Trigger factor (tig) from Mycoplasma pneumoniae (strain ATCC 29342 / M129 / Subtype 1) (Mycoplasmoides pneumoniae).